Consider the following 250-residue polypeptide: ATP synthase subunit b 2 (250 aa).

Residues 2–22 (LIDWFTVFAQILNFVILLGLL) traverse the membrane as a helical segment.

It belongs to the ATPase B chain family. In terms of assembly, F-type ATPases have 2 components, F(1) - the catalytic core - and F(0) - the membrane proton channel. F(1) has five subunits: alpha(3), beta(3), gamma(1), delta(1), epsilon(1). F(0) has four main subunits: a(1), b(1), b'(1) and c(10-14). The alpha and beta chains form an alternating ring which encloses part of the gamma chain. F(1) is attached to F(0) by a central stalk formed by the gamma and epsilon chains, while a peripheral stalk is formed by the delta, b and b' chains.

It localises to the cellular thylakoid membrane. Its function is as follows. F(1)F(0) ATP synthase produces ATP from ADP in the presence of a proton or sodium gradient. F-type ATPases consist of two structural domains, F(1) containing the extramembraneous catalytic core and F(0) containing the membrane proton channel, linked together by a central stalk and a peripheral stalk. During catalysis, ATP synthesis in the catalytic domain of F(1) is coupled via a rotary mechanism of the central stalk subunits to proton translocation. Functionally, component of the F(0) channel, it forms part of the peripheral stalk, linking F(1) to F(0). In Picosynechococcus sp. (strain ATCC 27264 / PCC 7002 / PR-6) (Agmenellum quadruplicatum), this protein is ATP synthase subunit b 2.